Consider the following 320-residue polypeptide: Aspartate carbamoyltransferase catalytic subunit (320 aa).

2 residues coordinate carbamoyl phosphate: R68 and T69. Residue K96 coordinates L-aspartate. Positions 118, 148, and 151 each coordinate carbamoyl phosphate. 2 residues coordinate L-aspartate: R181 and R236. 2 residues coordinate carbamoyl phosphate: G277 and P278.

Belongs to the aspartate/ornithine carbamoyltransferase superfamily. ATCase family. In terms of assembly, heterododecamer (2C3:3R2) of six catalytic PyrB chains organized as two trimers (C3), and six regulatory PyrI chains organized as three dimers (R2).

It carries out the reaction carbamoyl phosphate + L-aspartate = N-carbamoyl-L-aspartate + phosphate + H(+). Its pathway is pyrimidine metabolism; UMP biosynthesis via de novo pathway; (S)-dihydroorotate from bicarbonate: step 2/3. Its function is as follows. Catalyzes the condensation of carbamoyl phosphate and aspartate to form carbamoyl aspartate and inorganic phosphate, the committed step in the de novo pyrimidine nucleotide biosynthesis pathway. The polypeptide is Aspartate carbamoyltransferase catalytic subunit (Delftia acidovorans (strain DSM 14801 / SPH-1)).